The sequence spans 530 residues: Ataxin-10 homolog (530 aa).

Belongs to the ataxin-10 family.

The protein localises to the cytoplasm. May play a role in the regulation of cytokinesis. The protein is Ataxin-10 homolog (CTR86) of Candida glabrata (strain ATCC 2001 / BCRC 20586 / JCM 3761 / NBRC 0622 / NRRL Y-65 / CBS 138) (Yeast).